The sequence spans 512 residues: NAD(P)H-quinone oxidoreductase chain 4, chloroplastic (512 aa).

The next 14 helical transmembrane spans lie at 4 to 24, 34 to 54, 87 to 107, 111 to 131, 134 to 154, 167 to 187, 208 to 228, 242 to 262, 274 to 294, 308 to 328, 330 to 350, 374 to 396, 417 to 437, and 462 to 482; these read VPWL…IPLL, WYAL…FGCY, IGLI…AWPV, PKLF…LFAS, ILLF…LLSM, FILY…TASL, GLEI…LPAF, HYST…YGFI, TVFA…AALV, SSVS…DLGL, GAML…FLAG, MFAM…GFVS, IITL…LSMV, and VFVL…PNFA.

This sequence belongs to the complex I subunit 4 family.

Its subcellular location is the plastid. It localises to the chloroplast thylakoid membrane. The catalysed reaction is a plastoquinone + NADH + (n+1) H(+)(in) = a plastoquinol + NAD(+) + n H(+)(out). It catalyses the reaction a plastoquinone + NADPH + (n+1) H(+)(in) = a plastoquinol + NADP(+) + n H(+)(out). In Zygnema circumcarinatum (Green alga), this protein is NAD(P)H-quinone oxidoreductase chain 4, chloroplastic.